Here is a 211-residue protein sequence, read N- to C-terminus: Cytochrome c biogenesis ATP-binding export protein CcmA (211 aa).

Residues 6-211 (LQTVALACER…RDIDLGNWAV (206 aa)) enclose the ABC transporter domain. An ATP-binding site is contributed by 38 to 45 (GPNGSGKT).

This sequence belongs to the ABC transporter superfamily. CcmA exporter (TC 3.A.1.107) family. As to quaternary structure, the complex is composed of two ATP-binding proteins (CcmA) and two transmembrane proteins (CcmB).

It is found in the cell inner membrane. The enzyme catalyses heme b(in) + ATP + H2O = heme b(out) + ADP + phosphate + H(+). Its function is as follows. Part of the ABC transporter complex CcmAB involved in the biogenesis of c-type cytochromes; once thought to export heme, this seems not to be the case, but its exact role is uncertain. Responsible for energy coupling to the transport system. The chain is Cytochrome c biogenesis ATP-binding export protein CcmA from Pseudomonas fluorescens (strain Pf0-1).